Consider the following 466-residue polypeptide: GTPase Der (466 aa).

EngA-type G domains lie at 30–193 (PVVA…PEVS) and 203–376 (RRVA…ASWD). Residues 36-43 (GRPNVGKS), 83-87 (DTGGW), 145-148 (NKVD), 209-216 (GKPNVGKS), 256-260 (DTAGL), and 321-324 (NKWD) contribute to the GTP site. Residues 377 to 459 (TRIATGPLNS…PIRINVRVRE (83 aa)) enclose the KH-like domain.

It belongs to the TRAFAC class TrmE-Era-EngA-EngB-Septin-like GTPase superfamily. EngA (Der) GTPase family. As to quaternary structure, associates with the 50S ribosomal subunit.

Functionally, GTPase that plays an essential role in the late steps of ribosome biogenesis. The polypeptide is GTPase Der (Mycobacterium avium (strain 104)).